The sequence spans 308 residues: Porphobilinogen deaminase (308 aa).

An S-(dipyrrolylmethanemethyl)cysteine modification is found at Cys240.

It belongs to the HMBS family. Monomer. The cofactor is dipyrromethane.

It carries out the reaction 4 porphobilinogen + H2O = hydroxymethylbilane + 4 NH4(+). Its pathway is porphyrin-containing compound metabolism; protoporphyrin-IX biosynthesis; coproporphyrinogen-III from 5-aminolevulinate: step 2/4. In terms of biological role, tetrapolymerization of the monopyrrole PBG into the hydroxymethylbilane pre-uroporphyrinogen in several discrete steps. In Campylobacter hominis (strain ATCC BAA-381 / DSM 21671 / CCUG 45161 / LMG 19568 / NCTC 13146 / CH001A), this protein is Porphobilinogen deaminase.